We begin with the raw amino-acid sequence, 37 residues long: Large ribosomal subunit protein bL36c (37 aa).

This sequence belongs to the bacterial ribosomal protein bL36 family.

Its subcellular location is the plastid. It is found in the chloroplast. This Cryptomeria japonica (Japanese cedar) protein is Large ribosomal subunit protein bL36c.